Reading from the N-terminus, the 307-residue chain is Serine/threonine-protein phosphatase 4 catalytic subunit (307 aa).

At Ala2 the chain carries N-acetylalanine. Mn(2+)-binding residues include Asp54, His56, Asp82, and Asn114. Residue His115 is the Proton donor of the active site. His164 and His238 together coordinate Mn(2+). Position 307 is a leucine methyl ester (Leu307).

It belongs to the PPP phosphatase family. PP-4 (PP-X) subfamily. Serine/threonine-protein phosphatase 4 (PP4) occurs in different assemblies of the catalytic and one or more regulatory subunits. Component of the PP4 complexes PPP4C-PPP4R1, PPP4C-PPP4R2, PPP4C-PPP4R2-PPP4R3A, PPP4C-PPP4R2-PPP4R3B and PPP4C-PPP4R4. The PPP4C-PPP4R2 complex appears to be a tetramer composed of 2 molecules of PPP4C and 2 molecules of PPP4R2. Interacts with REL, NFKB1/p50 and RELA. Interacts with SMN1 and GEMIN4. Interacts with IRS4 (phosphorylated). Interacts with SMEK1/PPP4R3A; the interaction requires PP4R2. Interacts with HDAC3. Mn(2+) serves as cofactor. Methylation at the C-terminal Leu-307 is critical for interactions with regulatory subunits and functions in DNA repair.

The protein resides in the cytoplasm. Its subcellular location is the nucleus. It is found in the cytoskeleton. It localises to the microtubule organizing center. The protein localises to the centrosome. It carries out the reaction O-phospho-L-seryl-[protein] + H2O = L-seryl-[protein] + phosphate. The enzyme catalyses O-phospho-L-threonyl-[protein] + H2O = L-threonyl-[protein] + phosphate. Its function is as follows. Protein phosphatase that is involved in many processes such as microtubule organization at centrosomes, maturation of spliceosomal snRNPs, apoptosis, DNA repair, tumor necrosis factor (TNF)-alpha signaling, activation of c-Jun N-terminal kinase MAPK8, regulation of histone acetylation, DNA damage checkpoint signaling, NF-kappa-B activation and cell migration. The PPP4C-PPP4R1 PP4 complex may play a role in dephosphorylation and regulation of HDAC3. The PPP4C-PPP4R2-PPP4R3A PP4 complex specifically dephosphorylates H2AX phosphorylated on Ser-140 (gamma-H2AX) generated during DNA replication and required for DNA DSB repair. Dephosphorylates NDEL1 at CDK1 phosphorylation sites and negatively regulates CDK1 activity in interphase. In response to DNA damage, catalyzes RPA2 dephosphorylation, an essential step for DNA repair since it allows the efficient RPA2-mediated recruitment of RAD51 to chromatin. In Rattus norvegicus (Rat), this protein is Serine/threonine-protein phosphatase 4 catalytic subunit (Ppp4c).